A 478-amino-acid chain; its full sequence is Noelin-3 (478 aa).

The first 23 residues, 1–23 (MSAPLLKLGAVLSTMAMISNWMS), serve as a signal peptide directing secretion. N-linked (GlcNAc...) asparagine glycans are attached at residues asparagine 33, asparagine 95, asparagine 179, asparagine 299, and asparagine 465. The stretch at 77–217 (CSRDAKSRQL…TRLRDCMKKL (141 aa)) forms a coiled coil. The Olfactomedin-like domain maps to 218 to 470 (TCGKLMKITG…QVLFNVTLFH (253 aa)). Cysteine 219 and cysteine 401 are joined by a disulfide.

As to quaternary structure, peripherally associated with AMPAR complex. AMPAR complex consists of an inner core made of 4 pore-forming GluA/GRIA proteins (GRIA1, GRIA2, GRIA3 and GRIA4) and 4 major auxiliary subunits arranged in a twofold symmetry. One of the two pairs of distinct binding sites is occupied either by CNIH2, CNIH3 or CACNG2, CACNG3. The other harbors CACNG2, CACNG3, CACNG4, CACNG8 or GSG1L. This inner core of AMPAR complex is complemented by outer core constituents binding directly to the GluA/GRIA proteins at sites distinct from the interaction sites of the inner core constituents. Outer core constituents include at least PRRT1, PRRT2, CKAMP44/SHISA9, FRRS1L and NRN1. The proteins of the inner and outer core serve as a platform for other, more peripherally associated AMPAR constituents, including OLFM3. Alone or in combination, these auxiliary subunits control the gating and pharmacology of the AMPAR complex and profoundly impact their biogenesis and protein processing. Homodimer. Interacts with MYOC. Interacts with OLFM2. In terms of tissue distribution, expressed in the brain (at protein level). Also expressed in the retina, mainly in the ganglion cell layer and in the amacrine cell subregion of the inner nuclear layer. Expressed at high levels in the epithelial cells of the posterior iris and the ciliary body and, at lower levels, in the trabecular meshwork. Isoform 2 preferentially expressed in retina and brain, while isoform 1 preferentially expressed in the tissues of the eye angle.

It is found in the secreted. Its subcellular location is the synapse. The protein is Noelin-3 (Olfm3) of Rattus norvegicus (Rat).